The following is a 456-amino-acid chain: Dual-specificity RNA methyltransferase RlmN (456 aa).

The disordered stretch occupies residues 1–21 (MIQRHLGQPRLIQNGGDAGGV). Catalysis depends on E175, which acts as the Proton acceptor. The Radical SAM core domain occupies 183-416 (DEERGAVCIS…QDAGYSAPIR (234 aa)). A disulfide bond links C190 and C427. Residues C197, C201, and C204 each coordinate [4Fe-4S] cluster. S-adenosyl-L-methionine is bound by residues 253–254 (GE), S285, 307–309 (SLH), and N384. Residue C427 is the S-methylcysteine intermediate of the active site.

This sequence belongs to the radical SAM superfamily. RlmN family. Requires [4Fe-4S] cluster as cofactor.

Its subcellular location is the cytoplasm. It carries out the reaction adenosine(2503) in 23S rRNA + 2 reduced [2Fe-2S]-[ferredoxin] + 2 S-adenosyl-L-methionine = 2-methyladenosine(2503) in 23S rRNA + 5'-deoxyadenosine + L-methionine + 2 oxidized [2Fe-2S]-[ferredoxin] + S-adenosyl-L-homocysteine. It catalyses the reaction adenosine(37) in tRNA + 2 reduced [2Fe-2S]-[ferredoxin] + 2 S-adenosyl-L-methionine = 2-methyladenosine(37) in tRNA + 5'-deoxyadenosine + L-methionine + 2 oxidized [2Fe-2S]-[ferredoxin] + S-adenosyl-L-homocysteine. Specifically methylates position 2 of adenine 2503 in 23S rRNA and position 2 of adenine 37 in tRNAs. m2A2503 modification seems to play a crucial role in the proofreading step occurring at the peptidyl transferase center and thus would serve to optimize ribosomal fidelity. The chain is Dual-specificity RNA methyltransferase RlmN from Paramagnetospirillum magneticum (strain ATCC 700264 / AMB-1) (Magnetospirillum magneticum).